The sequence spans 1045 residues: Suppression of tumorigenicity 18 protein (1045 aa).

Disordered stretches follow at residues 38-90 (KKRR…NDHA), 158-228 (KAES…YNRK), and 340-364 (PRVT…RREA). Positions 52-63 (NKRKSLLMKPRH) are enriched in basic residues. 2 stretches are compositionally biased toward basic and acidic residues: residues 69–90 (GCKE…NDHA) and 159–177 (AESD…NGRD). 6 CCHHC-type zinc fingers span residues 357 to 400 (PRPE…PLEI), 401 to 444 (LAMH…KLAM), 713 to 756 (RDLK…LKSL), 757 to 800 (MAAN…GIKM), 805 to 848 (EEKE…QKEN), and 858 to 901 (KLNK…IKKV). Cys366, Cys371, His384, Cys390, Cys410, Cys415, His428, Cys434, Cys722, Cys727, His740, Cys746, Cys766, Cys771, His784, Cys790, Cys814, Cys819, His832, Cys838, Cys867, Cys872, His885, and Cys891 together coordinate Zn(2+). Residues 918–987 (IDGDEEIRHL…KELAGLSQAL (70 aa)) adopt a coiled-coil conformation.

It belongs to the MYT1 family.

The protein resides in the nucleus. In terms of biological role, repressor that binds to DNA sequences containing a bipartite element consisting of a direct repeat of the sequence 5'-AAAGTTT-3' separated by 2-9 nucleotides. Represses basal transcription activity from target promoters. This chain is Suppression of tumorigenicity 18 protein (St18), found in Mus musculus (Mouse).